The primary structure comprises 217 residues: Adenylate kinase (217 aa).

10–15 (GAGKGT) contacts ATP. Residues 30–59 (STGDIFRSNVSQGTPLGVQAKRYMDAGELV) are NMP. AMP-binding positions include T31, R36, 57 to 59 (ELV), 85 to 88 (GFPR), and Q92. Positions 126–163 (GRRTCRGCGKVWHVEFDAPSQEGRCDRCGAELFQRDDD) are LID. R127 serves as a coordination point for ATP. Residues C130, C133, C150, and C153 each coordinate Zn(2+). Residues R160 and R171 each contribute to the AMP site. G199 is an ATP binding site.

Belongs to the adenylate kinase family. In terms of assembly, monomer.

Its subcellular location is the cytoplasm. It catalyses the reaction AMP + ATP = 2 ADP. It participates in purine metabolism; AMP biosynthesis via salvage pathway; AMP from ADP: step 1/1. In terms of biological role, catalyzes the reversible transfer of the terminal phosphate group between ATP and AMP. Plays an important role in cellular energy homeostasis and in adenine nucleotide metabolism. The polypeptide is Adenylate kinase (Salinispora tropica (strain ATCC BAA-916 / DSM 44818 / JCM 13857 / NBRC 105044 / CNB-440)).